The following is a 401-amino-acid chain: G2/mitotic-specific cyclin-B1 (401 aa).

Belongs to the cyclin family. Cyclin AB subfamily. In terms of assembly, interacts with the CDK1 protein kinase to form a serine/threonine kinase holoenzyme complex also known as maturation promoting factor (MPF). The cyclin subunit imparts substrate specificity to the complex.

Its function is as follows. Essential for the control of the cell cycle at the G2/M (mitosis) transition. The polypeptide is G2/mitotic-specific cyclin-B1 (ccnb1) (Oryzias luzonensis (Luzon ricefish)).